Here is a 464-residue protein sequence, read N- to C-terminus: ATP-dependent protease ATPase subunit HslU (464 aa).

ATP-binding positions include Ile19, 61 to 66 (GVGKTE), Asp277, Glu342, and Arg414.

Belongs to the ClpX chaperone family. HslU subfamily. In terms of assembly, a double ring-shaped homohexamer of HslV is capped on each side by a ring-shaped HslU homohexamer. The assembly of the HslU/HslV complex is dependent on binding of ATP.

The protein localises to the cytoplasm. In terms of biological role, ATPase subunit of a proteasome-like degradation complex; this subunit has chaperone activity. The binding of ATP and its subsequent hydrolysis by HslU are essential for unfolding of protein substrates subsequently hydrolyzed by HslV. HslU recognizes the N-terminal part of its protein substrates and unfolds these before they are guided to HslV for hydrolysis. This chain is ATP-dependent protease ATPase subunit HslU, found in Lactobacillus gasseri (strain ATCC 33323 / DSM 20243 / BCRC 14619 / CIP 102991 / JCM 1131 / KCTC 3163 / NCIMB 11718 / NCTC 13722 / AM63).